The sequence spans 287 residues: D-apionate oxidoisomerase (287 aa).

Residues 13 to 15, glutamate 36, and aspartate 71 contribute to the NAD(+) site; that span reads GKM. Histidine 116 and glutamate 186 together coordinate Zn(2+).

Belongs to the ApnO family. It depends on Zn(2+) as a cofactor.

The enzyme catalyses D-apionate + NAD(+) = 3-oxoisoapionate + NADH + H(+). It functions in the pathway carbohydrate metabolism. Functionally, involved in catabolism of D-apiose. Catalyzes the conversion of D-apionate to 3-oxo-isoapionate. This chain is D-apionate oxidoisomerase, found in Blautia hydrogenotrophica (strain DSM 10507 / JCM 14656 / S5a33) (Ruminococcus hydrogenotrophicus).